The primary structure comprises 543 residues: Lipoyl synthase, apicoplast (543 aa).

Residues 1 to 63 (MAYFFDFPTD…LFSLLSASQS (63 aa)) form the signal peptide. Residues Cys252, Cys257, Cys263, Cys278, Cys282, Cys285, and Ser493 each contribute to the [4Fe-4S] cluster site. In terms of domain architecture, Radical SAM core spans 264–482 (WNGGTATLIL…QDIAEEMGFK (219 aa)).

Belongs to the radical SAM superfamily. Lipoyl synthase family. [4Fe-4S] cluster is required as a cofactor.

It is found in the plastid. The protein localises to the apicoplast. It catalyses the reaction [[Fe-S] cluster scaffold protein carrying a second [4Fe-4S](2+) cluster] + N(6)-octanoyl-L-lysyl-[protein] + 2 oxidized [2Fe-2S]-[ferredoxin] + 2 S-adenosyl-L-methionine + 4 H(+) = [[Fe-S] cluster scaffold protein] + N(6)-[(R)-dihydrolipoyl]-L-lysyl-[protein] + 4 Fe(3+) + 2 hydrogen sulfide + 2 5'-deoxyadenosine + 2 L-methionine + 2 reduced [2Fe-2S]-[ferredoxin]. Its pathway is protein modification; protein lipoylation via endogenous pathway; protein N(6)-(lipoyl)lysine from octanoyl-[acyl-carrier-protein]: step 2/2. Functionally, catalyzes the radical-mediated insertion of two sulfur atoms into the C-6 and C-8 positions of the octanoyl moiety bound to the lipoyl domains of lipoate-dependent enzymes, thereby converting the octanoylated domains into lipoylated derivatives. The polypeptide is Lipoyl synthase, apicoplast (Toxoplasma gondii).